We begin with the raw amino-acid sequence, 232 residues long: Large ribosomal subunit protein uL1 (232 aa).

The protein belongs to the universal ribosomal protein uL1 family. As to quaternary structure, part of the 50S ribosomal subunit.

Binds directly to 23S rRNA. The L1 stalk is quite mobile in the ribosome, and is involved in E site tRNA release. Its function is as follows. Protein L1 is also a translational repressor protein, it controls the translation of the L11 operon by binding to its mRNA. The sequence is that of Large ribosomal subunit protein uL1 from Rhizobium meliloti (strain 1021) (Ensifer meliloti).